The following is a 260-amino-acid chain: Thiazole synthase (260 aa).

The active-site Schiff-base intermediate with DXP is the Lys-102. 1-deoxy-D-xylulose 5-phosphate is bound by residues Gly-163, 189–190 (AG), and 211–212 (NT).

This sequence belongs to the ThiG family. Homotetramer. Forms heterodimers with either ThiH or ThiS.

It localises to the cytoplasm. The enzyme catalyses [ThiS sulfur-carrier protein]-C-terminal-Gly-aminoethanethioate + 2-iminoacetate + 1-deoxy-D-xylulose 5-phosphate = [ThiS sulfur-carrier protein]-C-terminal Gly-Gly + 2-[(2R,5Z)-2-carboxy-4-methylthiazol-5(2H)-ylidene]ethyl phosphate + 2 H2O + H(+). It participates in cofactor biosynthesis; thiamine diphosphate biosynthesis. Functionally, catalyzes the rearrangement of 1-deoxy-D-xylulose 5-phosphate (DXP) to produce the thiazole phosphate moiety of thiamine. Sulfur is provided by the thiocarboxylate moiety of the carrier protein ThiS. In vitro, sulfur can be provided by H(2)S. The protein is Thiazole synthase of Geobacter sp. (strain M21).